The primary structure comprises 222 residues: Salivary anticoagulant protein P23 (222 aa).

Positions 1-17 (MLTVSLLTLSLAAYASA) are cleaved as a signal peptide. Residues N56, N73, N109, and N114 are each glycosylated (N-linked (GlcNAc...) asparagine).

Salivary gland (at protein level). Adult midgut.

The protein localises to the secreted. In terms of biological role, inhibits host coagulation by delaying thrombin generation and reducing endogenous thrombin potential (ETP). This chain is Salivary anticoagulant protein P23, found in Ixodes scapularis (Black-legged tick).